A 581-amino-acid chain; its full sequence is Arginine--tRNA ligase (581 aa).

A 'HIGH' region motif is present at residues 126 to 136 (PNLAKEMHVGH).

This sequence belongs to the class-I aminoacyl-tRNA synthetase family. In terms of assembly, monomer.

It is found in the cytoplasm. It carries out the reaction tRNA(Arg) + L-arginine + ATP = L-arginyl-tRNA(Arg) + AMP + diphosphate. The sequence is that of Arginine--tRNA ligase from Shewanella sp. (strain MR-4).